The following is a 144-amino-acid chain: Hemoglobin embryonic subunit alpha (144 aa).

Positions 3–144 constitute a Globin domain; sequence SLSAKDKDVV…LALALAEKYR (142 aa). Position 61 (H61) interacts with O2. H90 serves as a coordination point for heme b.

Belongs to the globin family. As to quaternary structure, heterotetramer of two alpha chains and two beta chains. Red blood cells.

Its function is as follows. Involved in oxygen transport from gills to the various peripheral tissues. This chain is Hemoglobin embryonic subunit alpha, found in Oryzias latipes (Japanese rice fish).